We begin with the raw amino-acid sequence, 105 residues long: Flagellar transcriptional regulator FlhD (105 aa).

This sequence belongs to the FlhD family. As to quaternary structure, homodimer; disulfide-linked. Forms a heterohexamer composed of two FlhC and four FlhD subunits. Each FlhC binds a FlhD dimer, forming a heterotrimer, and a hexamer assembles by dimerization of two heterotrimers.

It is found in the cytoplasm. Functionally, functions in complex with FlhC as a master transcriptional regulator that regulates transcription of several flagellar and non-flagellar operons by binding to their promoter region. Activates expression of class 2 flagellar genes, including fliA, which is a flagellum-specific sigma factor that turns on the class 3 genes. Also regulates genes whose products function in a variety of physiological pathways. In Nitrosomonas eutropha (strain DSM 101675 / C91 / Nm57), this protein is Flagellar transcriptional regulator FlhD.